Consider the following 1593-residue polypeptide: THO complex subunit 2 (1593 aa).

The tract at residues 1-163 (MAAAAVVVPA…KLFYKQQKFN (163 aa)) is anchor domain; interaction with THOC5 and THOC7. The segment at 164–534 (LLREENEGYA…GQWKNETYNS (371 aa)) is bow domain; interaction with THOC1 dock domain and THOC3. Residues 322 to 341 (KMDEREKEKEKEEEKVEKPP) form a disordered region. The interval 535–686 (HPLLVKVKAQ…LILKEVVQKM (152 aa)) is MIF4G domain; interaction with THOC3 and DDX39B. Residues 687–1174 (AGIEITEEMT…LAMGYSGQLK (488 aa)) are stern domain. A coiled-coil region spans residues 896-965 (HTSYEREVNK…LKLEKDNWLL (70 aa)). The Nuclear localization signal signature appears at 923 to 928 (KKKKEK). The charged domain stretch occupies residues 1175-1593 (SRKSYMIPEN…KHHKSSDKHR (419 aa)). The disordered stretch occupies residues 1184–1593 (NEFHHKDPPP…KHHKSSDKHR (410 aa)). Residues 1218-1234 (KSDESSTEETDKSRERS) show a composition bias toward basic and acidic residues. Position 1222 is a phosphoserine (S1222). Low complexity predominate over residues 1251–1263 (GNSSNGNSGSNSN). Composition is skewed to basic and acidic residues over residues 1265-1285 (AVKE…KEKT), 1294-1343 (VLGK…EKFK), and 1353-1383 (STQE…KGGE). T1385 carries the phosphothreonine modification. A phosphoserine mark is found at S1390, S1393, and S1417. Residues 1416-1425 (PSPSHSSTVK) are compositionally biased toward polar residues. A Phosphothreonine modification is found at T1443. Over residues 1449–1504 (KSKEREMDKKDLDKSRERSREREKKDEKDRKERKRDHSNNDREVPPDLTKRRKEEN) the composition is skewed to basic and acidic residues. S1450, S1486, and S1516 each carry phosphoserine. The segment covering 1524–1582 (NEKDKEKNKSKSSGKEKGSDSFKSEKMDKISSGGKKESRHDKEKIEKKEKRDSSGGKEE) has biased composition (basic and acidic residues). Positions 1583 to 1593 (KKHHKSSDKHR) are enriched in basic residues.

Belongs to the THOC2 family. As to quaternary structure, component of the THO subcomplex, which is composed of THOC1, THOC2, THOC3, THOC5, THOC6 and THOC7. The THO subcomplex interacts with DDX39B to form the THO-DDX39B complex which multimerizes into a 28-subunit tetrameric assembly. Component of the transcription/export (TREX) complex at least composed of ALYREF/THOC4, DDX39B, SARNP/CIP29, CHTOP and the THO subcomplex; in the complex interacts with THOC1, THOC3, THOC5, THOC7 and DDX39B. TREX seems to have a dynamic structure involving ATP-dependent remodeling. Interacts with POLDIP3 and ZC3H11A. As to expression, expressed in the hippocampus and the cerebral cortex.

It localises to the nucleus. Its subcellular location is the nucleus speckle. It is found in the cytoplasm. In terms of biological role, component of the THO subcomplex of the TREX complex which is thought to couple mRNA transcription, processing and nuclear export, and which specifically associates with spliced mRNA and not with unspliced pre-mRNA. Required for efficient export of polyadenylated RNA and spliced mRNA. The THOC1-THOC2-THOC3 core complex alone is sufficient to bind export factor NXF1-NXT1 and promote ATPase activity of DDX39B; in the complex THOC2 is the only component that directly interacts with DDX39B. TREX is recruited to spliced mRNAs by a transcription-independent mechanism, binds to mRNA upstream of the exon-junction complex (EJC) and is recruited in a splicing- and cap-dependent manner to a region near the 5' end of the mRNA where it functions in mRNA export to the cytoplasm via the TAP/NXF1 pathway. Required for NXF1 localization to the nuclear rim. THOC2 (and probably the THO complex) is involved in releasing mRNA from nuclear speckle domains. (Microbial infection) The TREX complex is essential for the export of Kaposi's sarcoma-associated herpesvirus (KSHV) intronless mRNAs and infectious virus production. The polypeptide is THO complex subunit 2 (THOC2) (Homo sapiens (Human)).